Reading from the N-terminus, the 114-residue chain is MGELNKTKCVSCSEGLPPLAERESEELLKEIPEWVIVSEDGVSRLVRTFTFENFREAMAFAGSVGELAESEQHHPKLVTEWGKVRVEWWTHAVHGLHMNDFVMAARTDELFQEL.

Belongs to the pterin-4-alpha-carbinolamine dehydratase family.

The catalysed reaction is (4aS,6R)-4a-hydroxy-L-erythro-5,6,7,8-tetrahydrobiopterin = (6R)-L-erythro-6,7-dihydrobiopterin + H2O. The chain is Putative pterin-4-alpha-carbinolamine dehydratase from Chlorobium luteolum (strain DSM 273 / BCRC 81028 / 2530) (Pelodictyon luteolum).